Consider the following 174-residue polypeptide: uncharacterized protein (174 aa).

The interval 153 to 174 (RSGNHSAGNVHPASPMIKVQGG) is disordered.

This is an uncharacterized protein from Sinorhizobium fredii (strain NBRC 101917 / NGR234).